The following is a 422-amino-acid chain: Serine hydroxymethyltransferase (422 aa).

(6S)-5,6,7,8-tetrahydrofolate contacts are provided by residues L118 and 122–124; that span reads GHL. An N6-(pyridoxal phosphate)lysine modification is found at K227. Residues E243 and 351 to 353 each bind (6S)-5,6,7,8-tetrahydrofolate; that span reads SPF.

The protein belongs to the SHMT family. Homodimer. The cofactor is pyridoxal 5'-phosphate.

The protein localises to the cytoplasm. The catalysed reaction is (6R)-5,10-methylene-5,6,7,8-tetrahydrofolate + glycine + H2O = (6S)-5,6,7,8-tetrahydrofolate + L-serine. The protein operates within one-carbon metabolism; tetrahydrofolate interconversion. Its pathway is amino-acid biosynthesis; glycine biosynthesis; glycine from L-serine: step 1/1. Catalyzes the reversible interconversion of serine and glycine with tetrahydrofolate (THF) serving as the one-carbon carrier. This reaction serves as the major source of one-carbon groups required for the biosynthesis of purines, thymidylate, methionine, and other important biomolecules. Also exhibits THF-independent aldolase activity toward beta-hydroxyamino acids, producing glycine and aldehydes, via a retro-aldol mechanism. The protein is Serine hydroxymethyltransferase of Kosmotoga olearia (strain ATCC BAA-1733 / DSM 21960 / TBF 19.5.1).